A 22-amino-acid polypeptide reads, in one-letter code: NADH dehydrogenase [ubiquinone] 1 alpha subcomplex subunit 9 (22 aa).

The interval 1 to 22 (ASNLATGGAGPLIXKGTGGRSS) is disordered.

This sequence belongs to the complex I NDUFA9 subunit family. As to quaternary structure, complex I is composed of about 45 different subunits. FAD serves as cofactor.

Its subcellular location is the mitochondrion matrix. Its function is as follows. Accessory subunit of the mitochondrial membrane respiratory chain NADH dehydrogenase (Complex I), that is believed not to be involved in catalysis. Complex I functions in the transfer of electrons from NADH to the respiratory chain. The immediate electron acceptor for the enzyme is believed to be ubiquinone. The protein is NADH dehydrogenase [ubiquinone] 1 alpha subcomplex subunit 9 of Solanum tuberosum (Potato).